A 416-amino-acid chain; its full sequence is MSLVAIGINHKTATVDLREKVAFSPDKIHDAMKSLASRTRSGEAVIVSTCNRTELYCNNGDEADIIAWLEEYHGLDHKDVAPCLYNYHGQDAVRHLMRVASGLDSLILGEPQILGQVKQAFVKAKEAGTVALTIDRLFQNTFSVAKKVRTDTEIGAAAVSVAFAAVSMAKHIFSSISTTKVLLIGAGETIELVAKHLKDNGVASMVVANRTLERAQGMCEEFGATAITLAQIPDYLPKADIVISSTASPLPILGKGMVEKALKQRRHQPMLLVDIAVPRDIEPEVADLDDAFLYTVDDLHSIIEQNMASRKEAAEQAEVITEEQSFLFMDWIRSLESVDSIREYRSQSMAVKDELVERALNKLAQGSDTEQVLIELANRLTNKLIHAPTQALTAASRQGDLNTLGQLRSALGLDKN.

Residues Thr-49–Arg-52, Ser-105, Glu-110–Gln-112, and Gln-116 each bind substrate. Residue Cys-50 is the Nucleophile of the active site. Residue Gly-185 to Ile-190 participates in NADP(+) binding.

The protein belongs to the glutamyl-tRNA reductase family. In terms of assembly, homodimer.

It carries out the reaction (S)-4-amino-5-oxopentanoate + tRNA(Glu) + NADP(+) = L-glutamyl-tRNA(Glu) + NADPH + H(+). It functions in the pathway porphyrin-containing compound metabolism; protoporphyrin-IX biosynthesis; 5-aminolevulinate from L-glutamyl-tRNA(Glu): step 1/2. Catalyzes the NADPH-dependent reduction of glutamyl-tRNA(Glu) to glutamate 1-semialdehyde (GSA). The polypeptide is Glutamyl-tRNA reductase (Shewanella baltica (strain OS223)).